We begin with the raw amino-acid sequence, 611 residues long: Histone acetyltransferase KAT7 (611 aa).

Residues 1 to 173 (MPRRKRNAGS…SDLSHRPKRR (173 aa)) are disordered. At S10 the chain carries Phosphoserine. A compositionally biased stretch (low complexity) spans 42 to 57 (VTRSSARLSQSSQDSS). Phosphoserine; by ATR is present on residues S50 and S53. At S57 the chain carries Phosphoserine; by PLK1. S64 bears the Phosphoserine mark. 2 positions are modified to phosphothreonine; by CDK1: T85 and T88. Positions 96–105 (QTRSSGSETE) are enriched in polar residues. S102 bears the Phosphoserine mark. Phosphothreonine is present on T104. Residues 110 to 125 (FSDRETKNTADHDESP) show a composition bias toward basic and acidic residues. 2 positions are modified to phosphoserine: S111 and S124. Residue T128 is modified to Phosphothreonine. Low complexity predominate over residues 134–145 (PSSESDIDISSP). The span at 148–168 (SHDESIAKDMSLKDSGSDLSH) shows a compositional bias: basic and acidic residues. Residues S158, S162, S164, and S178 each carry the phosphoserine modification. The segment at 176–219 (HESYNFNMKCPTPGCNSLGHLTGKHERHFSISGCPLYHNLSADE) adopts a CCHHC-type zinc-finger fold. Residues K199 and K277 each carry the N6-acetyllysine modification. K323 is covalently cross-linked (Glycyl lysine isopeptide (Lys-Gly) (interchain with G-Cter in SUMO2)). The MYST-type HAT domain maps to 332 to 607 (EGSNMIKTIA…MDPSCLKWTP (276 aa)). A Glycyl lysine isopeptide (Lys-Gly) (interchain with G-Cter in ubiquitin) cross-link involves residue K338. The segment at 365 to 390 (LYMCEFCLKYMKSQTILRRHMAKCVW) adopts a C2HC MYST-type zinc-finger fold. Positions 368, 371, 384, and 388 each coordinate Zn(2+). An N6-acetyllysine; by autocatalysis modification is found at K432. Acetyl-CoA contacts are provided by residues 475–477 (ILT) and 483–488 (RQGYGK). Position 506 is a phosphoserine (S506). The active-site Proton donor/acceptor is the E508. Acetyl-CoA is bound by residues S512 and S521.

Belongs to the MYST (SAS/MOZ) family. Component of the HBO1 complex composed of KAT7/HBO1, MEAF6, ING4 or ING5, and one scaffold subunit: complexes containing BRPF scaffold (BRPF1, BRD1/BRPF2 or BRPF3) direct KAT7/HBO1 specificity towards H3K14ac, while complexes containing JADE scaffold (JADE1, JADE2 and JADE3) mediate acetylation of histone H4. Interacts with MCM2 and ORC1. Interacts with the androgen receptor (AR); in the presence of dihydrotestosterone. Interacts with CDT1. Interacts with MAP2K1 and CUL1. Interacts with p53/TP53; leading to inhibit histone acetyltransferase activity. Interacts with MIS18BP1. In terms of processing, phosphorylated at Ser-50 and Ser-53 by ATR in response to DNA damage, promoting its ubiquitination by the CRL4(DDB2) complex and subsequent degradation. Phosphorylation at Ser-50 and Ser-53 by ATR in response to ultraviolet-induced DNA, promotes localization to DNA damage sites. Phosphorylation at Ser-57 by PLK1 during mitosis seems important for prereplicative complex formation and DNA replication licensing, and requires prior phosphorylation at Thr-85 and Thr-88 by CDK1. Phosphorylated by MAP2K1, which accelerates its degradation. Ubiquitinated at Lys-338, leading to proteasomal degradation. Ubiquitinated by the CRL4(DDB2) complex following phosphorylation by ATR, leading to its subsequent degradation. Post-translationally, autoacetylation at Lys-432 is required for proper function. As to expression, ubiquitously expressed, with highest levels in testis.

Its subcellular location is the nucleus. The protein resides in the chromosome. It is found in the centromere. It localises to the cytoplasm. The protein localises to the cytosol. It catalyses the reaction L-lysyl-[histone] + acetyl-CoA = N(6)-acetyl-L-lysyl-[histone] + CoA + H(+). With respect to regulation, histone acetyltransferase activity is inhibited by GMNN in the context of a complex with CDT1, inhibiting histone H4 acetylation and DNA replication licensing. Selectively inhibited by WM-3835 (N'-(4-fluoro-5-methyl-[1,1'-biphenyl]-3-carbonyl)-3- hydroxybenzenesulfonohydrazide) inhibitor. Its function is as follows. Catalytic subunit of histone acetyltransferase HBO1 complexes, which specifically mediate acetylation of histone H3 at 'Lys-14' (H3K14ac), thereby regulating various processes, such as gene transcription, protein ubiquitination, immune regulation, stem cell pluripotent and self-renewal maintenance and embryonic development. Some complexes also catalyze acetylation of histone H4 at 'Lys-5', 'Lys-8' and 'Lys-12' (H4K5ac, H4K8ac and H4K12ac, respectively), regulating DNA replication initiation, regulating DNA replication initiation. Specificity of the HBO1 complexes is determined by the scaffold subunit: complexes containing BRPF scaffold (BRPF1, BRD1/BRPF2 or BRPF3) direct KAT7/HBO1 specificity towards H3K14ac, while complexes containing JADE (JADE1, JADE2 and JADE3) scaffold direct KAT7/HBO1 specificity towards histone H4. H3K14ac promotes transcriptional elongation by facilitating the processivity of RNA polymerase II. Acts as a key regulator of hematopoiesis by forming a complex with BRD1/BRPF2, directing KAT7/HBO1 specificity towards H3K14ac and promoting erythroid differentiation. H3K14ac is also required for T-cell development. KAT7/HBO1-mediated acetylation facilitates two consecutive steps, licensing and activation, in DNA replication initiation: H3K14ac facilitates the activation of replication origins, and histone H4 acetylation (H4K5ac, H4K8ac and H4K12ac) facilitates chromatin loading of MCM complexes, promoting DNA replication licensing. Acts as a positive regulator of centromeric CENPA assembly: recruited to centromeres and mediates histone acetylation, thereby preventing centromere inactivation mediated by SUV39H1, possibly by increasing histone turnover/exchange. Involved in nucleotide excision repair: phosphorylation by ATR in response to ultraviolet irradiation promotes its localization to DNA damage sites, where it mediates histone acetylation to facilitate recruitment of XPC at the damaged DNA sites. Acts as an inhibitor of NF-kappa-B independently of its histone acetyltransferase activity. Plays a central role in the maintenance of leukemia stem cells in acute myeloid leukemia (AML). Acts by mediating acetylation of histone H3 at 'Lys-14' (H3K14ac), thereby facilitating the processivity of RNA polymerase II to maintain the high expression of key genes, such as HOXA9 and HOXA10 that help to sustain the functional properties of leukemia stem cells. In Homo sapiens (Human), this protein is Histone acetyltransferase KAT7.